Here is a 360-residue protein sequence, read N- to C-terminus: Phospho-N-acetylmuramoyl-pentapeptide-transferase (360 aa).

10 helical membrane passes run 21 to 41, 73 to 93, 98 to 118, 132 to 152, 168 to 188, 199 to 219, 236 to 256, 263 to 283, 288 to 308, and 338 to 358; these read YITFRAIMALLTAMGIGLWIG, TMGGIMILIAIGVSTLLWADL, IWFVLFVLFGYGAVGFVDDYW, WKYFWLSVIALIAVFGIYAVG, VMPQLGIFFIILSYFVIVGTS, GLAIVPTIMVASAFALIAWAT, AGELVILCTAIVGAGLGFLWY, VFMGDVGSLSLGGALGTIAVL, LLLVIMGGVFVVEALSVILQV, and VIVRFWIITLMLVLIGLVTLK.

It belongs to the glycosyltransferase 4 family. MraY subfamily. It depends on Mg(2+) as a cofactor.

It is found in the cell inner membrane. The enzyme catalyses UDP-N-acetyl-alpha-D-muramoyl-L-alanyl-gamma-D-glutamyl-meso-2,6-diaminopimeloyl-D-alanyl-D-alanine + di-trans,octa-cis-undecaprenyl phosphate = di-trans,octa-cis-undecaprenyl diphospho-N-acetyl-alpha-D-muramoyl-L-alanyl-D-glutamyl-meso-2,6-diaminopimeloyl-D-alanyl-D-alanine + UMP. It participates in cell wall biogenesis; peptidoglycan biosynthesis. In terms of biological role, catalyzes the initial step of the lipid cycle reactions in the biosynthesis of the cell wall peptidoglycan: transfers peptidoglycan precursor phospho-MurNAc-pentapeptide from UDP-MurNAc-pentapeptide onto the lipid carrier undecaprenyl phosphate, yielding undecaprenyl-pyrophosphoryl-MurNAc-pentapeptide, known as lipid I. This chain is Phospho-N-acetylmuramoyl-pentapeptide-transferase, found in Actinobacillus pleuropneumoniae serotype 5b (strain L20).